The chain runs to 960 residues: Isoleucine--tRNA ligase (960 aa).

The 'HIGH' region signature appears at 60–70; it reads PYANGSLHIGH. Position 573 (Glu573) interacts with L-isoleucyl-5'-AMP. The 'KMSKS' region motif lies at 614–618; that stretch reads KMSKS. An ATP-binding site is contributed by Lys617. Zn(2+)-binding residues include Cys929, Cys932, Cys949, and Cys952.

It belongs to the class-I aminoacyl-tRNA synthetase family. IleS type 1 subfamily. In terms of assembly, monomer. The cofactor is Zn(2+).

It localises to the cytoplasm. The catalysed reaction is tRNA(Ile) + L-isoleucine + ATP = L-isoleucyl-tRNA(Ile) + AMP + diphosphate. Its function is as follows. Catalyzes the attachment of isoleucine to tRNA(Ile). As IleRS can inadvertently accommodate and process structurally similar amino acids such as valine, to avoid such errors it has two additional distinct tRNA(Ile)-dependent editing activities. One activity is designated as 'pretransfer' editing and involves the hydrolysis of activated Val-AMP. The other activity is designated 'posttransfer' editing and involves deacylation of mischarged Val-tRNA(Ile). This chain is Isoleucine--tRNA ligase, found in Nostoc sp. (strain PCC 7120 / SAG 25.82 / UTEX 2576).